The following is a 527-amino-acid chain: Glutamate--cysteine ligase (527 aa).

This sequence belongs to the glutamate--cysteine ligase type 1 family. Type 1 subfamily.

It carries out the reaction L-cysteine + L-glutamate + ATP = gamma-L-glutamyl-L-cysteine + ADP + phosphate + H(+). It participates in sulfur metabolism; glutathione biosynthesis; glutathione from L-cysteine and L-glutamate: step 1/2. In Pseudomonas aeruginosa (strain UCBPP-PA14), this protein is Glutamate--cysteine ligase.